Here is a 918-residue protein sequence, read N- to C-terminus: Nitrate reductase [NADH] (918 aa).

Residues 25–44 are disordered; the sequence is KNGPNHRADSPVRGCNFPNS. Position 195 (C195) interacts with Mo-molybdopterin. Positions 543-618 constitute a Cytochrome b5 heme-binding domain; the sequence is SNTYTLSEVK…LEDYRIGELI (76 aa). The heme site is built by H578 and H601. The region spanning 661 to 774 is the FAD-binding FR-type domain; it reads NEKIPCKLIS…KGPLGHIEYT (114 aa). FAD-binding positions include 714–717, 731–735, F736, F743, 748–750, and T801; these read RAYT, VVKVY, and IMS.

This sequence belongs to the nitrate reductase family. As to quaternary structure, homodimer. FAD serves as cofactor. It depends on heme as a cofactor. The cofactor is Mo-molybdopterin.

The catalysed reaction is nitrite + NAD(+) + H2O = nitrate + NADH + H(+). In terms of biological role, nitrate reductase is a key enzyme involved in the first step of nitrate assimilation in plants, fungi and bacteria. The sequence is that of Nitrate reductase [NADH] from Cucurbita maxima (Pumpkin).